Here is a 309-residue protein sequence, read N- to C-terminus: Methyltransferase AacuQ (309 aa).

The interval 57–149 (DVGAGNGPYA…QLRPGGTFAC (93 aa)) is methyltransferase domain.

It belongs to the methyltransferase superfamily.

Its pathway is secondary metabolite biosynthesis. Functionally, methyltransferase; part of the gene cluster that mediates the biosynthesis of the tetrahydroxanthone dimer secalonic acid D. The pathway begins with the synthesis of atrochrysone thioester by the polyketide synthase AacuL. The atrochrysone carboxyl ACP thioesterase AacuM then breaks the thioester bond and releases the atrochrysone carboxylic acid from AacuL. Atrochrysone carboxylic acid is decarboxylated by the decarboxylase AacuI, and oxidized by the anthrone oxygenase AacuG to yield emodin. Emodin is then reduced to emodin hydroquinone by a yet unidentified oxidoreductase. A-ring reduction by the short chain dehydrogenase AacuN, dehydration by the scytalone dehydratase-like protein AacuK and probable spontaneous re-oxidation, results in overall deoxygenation to chrysophanol. Baeyer-Villiger oxidation by the Baeyer-Villiger monooxygenase (BVMO) AacuH then yields monodictyphenone. Monodictyphenone is transformed into compounds with the tetrahydroxanthone skeleton via methylesterification by the methyltransferase AacuQ, followed by the action of the flavin-dependent monooxygenase AacuC, the isomerase AacuP, and the short chain dehydrogenase/reductase AacuF or AacuD. AacuF and AacuD should accept the same compound as a substrate but perform the ketoreduction with a different stereoselectivity, thus yielding blennolides B and A, respectively. In the final step of the biosynthesis, the cytochrome P450 monooxygenase AacuE accepts blennolide B and/or blennolide A to conduct the dimerization reaction to furnish the tetrahydroxanthone dimers, secalonic acids D, B, and F. This Aspergillus aculeatus (strain ATCC 16872 / CBS 172.66 / WB 5094) protein is Methyltransferase AacuQ.